The primary structure comprises 170 residues: Crossover junction endodeoxyribonuclease RuvC (170 aa).

Residues Asp12, Glu72, and Asp144 contribute to the active site. Mg(2+)-binding residues include Asp12, Glu72, and Asp144.

Belongs to the RuvC family. Homodimer which binds Holliday junction (HJ) DNA. The HJ becomes 2-fold symmetrical on binding to RuvC with unstacked arms; it has a different conformation from HJ DNA in complex with RuvA. In the full resolvosome a probable DNA-RuvA(4)-RuvB(12)-RuvC(2) complex forms which resolves the HJ. Requires Mg(2+) as cofactor.

The protein resides in the cytoplasm. The catalysed reaction is Endonucleolytic cleavage at a junction such as a reciprocal single-stranded crossover between two homologous DNA duplexes (Holliday junction).. Its function is as follows. The RuvA-RuvB-RuvC complex processes Holliday junction (HJ) DNA during genetic recombination and DNA repair. Endonuclease that resolves HJ intermediates. Cleaves cruciform DNA by making single-stranded nicks across the HJ at symmetrical positions within the homologous arms, yielding a 5'-phosphate and a 3'-hydroxyl group; requires a central core of homology in the junction. The consensus cleavage sequence is 5'-(A/T)TT(C/G)-3'. Cleavage occurs on the 3'-side of the TT dinucleotide at the point of strand exchange. HJ branch migration catalyzed by RuvA-RuvB allows RuvC to scan DNA until it finds its consensus sequence, where it cleaves and resolves the cruciform DNA. This Nitrobacter hamburgensis (strain DSM 10229 / NCIMB 13809 / X14) protein is Crossover junction endodeoxyribonuclease RuvC.